Here is a 242-residue protein sequence, read N- to C-terminus: Probable 2-phosphosulfolactate phosphatase (242 aa).

This sequence belongs to the ComB family. The cofactor is Mg(2+).

The enzyme catalyses (2R)-O-phospho-3-sulfolactate + H2O = (2R)-3-sulfolactate + phosphate. This is Probable 2-phosphosulfolactate phosphatase from Synechococcus sp. (strain JA-3-3Ab) (Cyanobacteria bacterium Yellowstone A-Prime).